The chain runs to 1751 residues: Non-reducing polyketide synthase afvB (1751 aa).

The tract at residues F19 to H249 is N-terminal acylcarrier protein transacylase domain (SAT). The 431-residue stretch at H381 to E811 folds into the Ketosynthase family 3 (KS3) domain. Active-site for beta-ketoacyl synthase activity residues include C554, H689, and H730. Positions F910–V1228 are malonyl-CoA:ACP transacylase (MAT) domain. Residues T1291 to D1607 form a product template (PT) domain region. Residues H1295–S1429 form an N-terminal hotdog fold region. Residues H1295–S1603 form the PKS/mFAS DH domain. H1327 acts as the Proton acceptor; for dehydratase activity in catalysis. Residues L1456–S1603 form a C-terminal hotdog fold region. Residue D1514 is the Proton donor; for dehydratase activity of the active site. Residues D1610–N1670 are disordered. A compositionally biased stretch (polar residues) spans Q1612–E1657. In terms of domain architecture, Carrier spans N1670–Q1747. At S1707 the chain carries O-(pantetheine 4'-phosphoryl)serine.

Pantetheine 4'-phosphate is required as a cofactor. In terms of tissue distribution, expressed mainly in sclerotia, with expression levels 20-fold and 10-fold greater than the expression levels of this gene found in mycelium and conidia, respectively.

The protein operates within secondary metabolite biosynthesis. Its function is as follows. Non-reducing polyketide synthase (NRPKS); part of the gene cluster that mediates the biosynthesis of aflavarin, a bicoumarin that exhibits anti-insectan activity against the fungivorous beetle C.hemipterus. Catalyzes the formation of the aromatic polyketide from acetyl coenzyme A and seven malonyl coenzyme A molecules. The protein is Non-reducing polyketide synthase afvB of Aspergillus flavus (strain ATCC 200026 / FGSC A1120 / IAM 13836 / NRRL 3357 / JCM 12722 / SRRC 167).